The following is a 241-amino-acid chain: Glutathione S-transferase theta-3 (241 aa).

One can recognise a GST N-terminal domain in the interval 2–82; it reads GLELYLDLMS…YLSRKYKAPD (81 aa). Glutathione is bound by residues 53-54 and 66-67; these read KV and ES. The 135-residue stretch at 88–222 folds into the GST C-terminal domain; it reads DLQTRARVDE…VVLKAKDMPP (135 aa).

This sequence belongs to the GST superfamily. Theta family. In terms of assembly, homodimer. Expressed strongly in liver, and at lower levels in kidney and testis.

The protein localises to the cytoplasm. It catalyses the reaction RX + glutathione = an S-substituted glutathione + a halide anion + H(+). In terms of biological role, conjugation of reduced glutathione to a wide number of exogenous and endogenous hydrophobic electrophiles. Shows high activity towards 4-nitrobenzyl chloride (4-NBC). Also has lower activity towards 1,2-epoxy-3-(p-nitrophenoxy)propane (EPNP), cumene hydroperoxide, 1-chloro-2,4-dinitrobenzene (CDNB), 7-chloro-4-nitrobenzo-2-oxa-1,3-diazole (NBD-Cl), and ethacrynic acid. This Mus musculus (Mouse) protein is Glutathione S-transferase theta-3.